The following is a 186-amino-acid chain: MHATSHEPAVWHGTTILTVRKGGRVVIGGDGQVSIGQTVIKSNARKVRKLGKGDVIGGFAGATADAFTLFERLESKLEQYPGQLTRAAVELAKDWRTDRYLRRLEAMMIVADKEVSLVLTGTGDVLEPEAGVMAIGSGGNYALAAARALIDTDKDAESIVRRSLDIAADICVYTNRNITIEALAAE.

Threonine 14 is an active-site residue. Positions 168, 171, and 174 each coordinate Na(+).

Belongs to the peptidase T1B family. HslV subfamily. In terms of assembly, a double ring-shaped homohexamer of HslV is capped on each side by a ring-shaped HslU homohexamer. The assembly of the HslU/HslV complex is dependent on binding of ATP.

It localises to the cytoplasm. It carries out the reaction ATP-dependent cleavage of peptide bonds with broad specificity.. Its activity is regulated as follows. Allosterically activated by HslU binding. Its function is as follows. Protease subunit of a proteasome-like degradation complex believed to be a general protein degrading machinery. This chain is ATP-dependent protease subunit HslV, found in Bradyrhizobium sp. (strain BTAi1 / ATCC BAA-1182).